The primary structure comprises 417 residues: Tyrosine--tRNA ligase (417 aa).

Residue Tyr34 participates in L-tyrosine binding. A 'HIGH' region motif is present at residues 39–48; that stretch reads PTGDSMHIGH. Positions 165 and 169 each coordinate L-tyrosine. The 'KMSKS' region motif lies at 227–231; that stretch reads KFGKS. ATP is bound at residue Lys230. Residues 349–417 enclose the S4 RNA-binding domain; sequence ENIVLWLVDT…KKKYFLARVK (69 aa).

This sequence belongs to the class-I aminoacyl-tRNA synthetase family. TyrS type 1 subfamily. Homodimer.

It localises to the cytoplasm. It carries out the reaction tRNA(Tyr) + L-tyrosine + ATP = L-tyrosyl-tRNA(Tyr) + AMP + diphosphate + H(+). Its function is as follows. Catalyzes the attachment of tyrosine to tRNA(Tyr) in a two-step reaction: tyrosine is first activated by ATP to form Tyr-AMP and then transferred to the acceptor end of tRNA(Tyr). In Pediococcus pentosaceus (strain ATCC 25745 / CCUG 21536 / LMG 10740 / 183-1w), this protein is Tyrosine--tRNA ligase.